The primary structure comprises 873 residues: Sister chromatid cohesion protein PDS5 homolog C (873 aa).

HEAT repeat units follow at residues 53–92 (NALT…ITAP), 99–136 (DQMK…VAKV), 149–187 (ALLI…ESED), and 189–227 (PSEM…KLKT). The span at 266–301 (NEKEDSQGHIKRETEVEKAAEISTPERTDAPKDESG) shows a compositional bias: basic and acidic residues. Disordered stretches follow at residues 266–611 (NEKE…LVGS) and 658–873 (SPLD…KRKR). Threonine 289 carries the post-translational modification Phosphothreonine. Residues 303–319 (SGVSNGVAQQNDSSVDT) show a composition bias toward polar residues. A compositionally biased stretch (basic and acidic residues) spans 320–334 (DSMKKQDDTGAKDEP). Over residues 336 to 348 (QLDNPRNTDLNNT) the composition is skewed to polar residues. 2 stretches are compositionally biased toward basic and acidic residues: residues 349–365 (TEEK…KENE) and 373–394 (DLSK…DSKD). Composition is skewed to polar residues over residues 400 to 411 (PVDSSVTAATSS) and 418 to 438 (SVQI…SSPS). The segment covering 456-466 (KKKESSTEEVK) has biased composition (basic and acidic residues). Positions 494-510 (KVASSSKTKPTVPPSKK) are enriched in low complexity. 2 stretches are compositionally biased toward basic and acidic residues: residues 511-526 (STSE…KKVV) and 535-555 (TKPK…EESL). Acidic residues predominate over residues 661 to 681 (DESELSQDEEAADQTGQEEDA). Over residues 701–725 (SSAKKGSGAGSSKAKATPASKSSKT) the composition is skewed to low complexity. A compositionally biased stretch (basic and acidic residues) spans 726–746 (SQDDKTASKSKDSKEASREEE). A compositionally biased stretch (acidic residues) spans 747–757 (ASSEEESEEEE). Composition is skewed to low complexity over residues 795-814 (KATT…PAKS) and 822-831 (KSGSASTPAS). Residues 844 to 853 (ETPKEPEPAT) show a composition bias toward basic and acidic residues. The span at 854-866 (KAKSGKSQGSQSK) shows a compositional bias: low complexity.

It belongs to the PDS5 family. In terms of assembly, interacts with the cohesin complex.

The protein localises to the nucleus. Its function is as follows. Cohesin cofactor dispensable during the meiotic division but playing an important role in DNA repair by homologous recombination (HR) probably by helping SMC5/SMC6 complex. Regulator of sister chromatid cohesion in mitosis which may stabilize cohesin complex association with chromatin. May couple sister chromatid cohesion during mitosis to DNA replication. Cohesion ensures that chromosome partitioning is accurate in both meiotic and mitotic cells and plays an important role in DNA repair. The sequence is that of Sister chromatid cohesion protein PDS5 homolog C from Arabidopsis thaliana (Mouse-ear cress).